We begin with the raw amino-acid sequence, 98 residues long: Large ribosomal subunit protein uL23 (98 aa).

Belongs to the universal ribosomal protein uL23 family. As to quaternary structure, part of the 50S ribosomal subunit. Contacts protein L29, and trigger factor when it is bound to the ribosome.

One of the early assembly proteins it binds 23S rRNA. One of the proteins that surrounds the polypeptide exit tunnel on the outside of the ribosome. Forms the main docking site for trigger factor binding to the ribosome. In Bordetella avium (strain 197N), this protein is Large ribosomal subunit protein uL23.